We begin with the raw amino-acid sequence, 631 residues long: Phosphomethylpyrimidine synthase (631 aa).

Substrate contacts are provided by residues Asn-239, Met-268, Tyr-297, His-333, 353–355 (SRG), 394–397 (DGLR), and Glu-433. Residue His-437 coordinates Zn(2+). Position 460 (Tyr-460) interacts with substrate. His-501 is a binding site for Zn(2+). [4Fe-4S] cluster contacts are provided by Cys-581, Cys-584, and Cys-589.

It belongs to the ThiC family. As to quaternary structure, homodimer. [4Fe-4S] cluster is required as a cofactor.

It catalyses the reaction 5-amino-1-(5-phospho-beta-D-ribosyl)imidazole + S-adenosyl-L-methionine = 4-amino-2-methyl-5-(phosphooxymethyl)pyrimidine + CO + 5'-deoxyadenosine + formate + L-methionine + 3 H(+). The protein operates within cofactor biosynthesis; thiamine diphosphate biosynthesis. Its function is as follows. Catalyzes the synthesis of the hydroxymethylpyrimidine phosphate (HMP-P) moiety of thiamine from aminoimidazole ribotide (AIR) in a radical S-adenosyl-L-methionine (SAM)-dependent reaction. In Escherichia coli O157:H7, this protein is Phosphomethylpyrimidine synthase.